We begin with the raw amino-acid sequence, 441 residues long: ATP-dependent protease ATPase subunit HslU (441 aa).

ATP contacts are provided by residues Ile18, 60–65 (GVGKTE), Asp254, Glu319, and Arg391.

Belongs to the ClpX chaperone family. HslU subfamily. In terms of assembly, a double ring-shaped homohexamer of HslV is capped on each side by a ring-shaped HslU homohexamer. The assembly of the HslU/HslV complex is dependent on binding of ATP.

The protein localises to the cytoplasm. Functionally, ATPase subunit of a proteasome-like degradation complex; this subunit has chaperone activity. The binding of ATP and its subsequent hydrolysis by HslU are essential for unfolding of protein substrates subsequently hydrolyzed by HslV. HslU recognizes the N-terminal part of its protein substrates and unfolds these before they are guided to HslV for hydrolysis. The polypeptide is ATP-dependent protease ATPase subunit HslU (Shewanella denitrificans (strain OS217 / ATCC BAA-1090 / DSM 15013)).